The primary structure comprises 252 residues: Flagellar brake protein YcgR (252 aa).

The PilZ domain occupies 118–236 (QRREYFRVSI…EKGLQRAIFE (119 aa)).

Belongs to the YcgR family. In terms of assembly, monomer. Interacts with the flagellar basal bodies.

Its subcellular location is the bacterial flagellum basal body. Acts as a flagellar brake, regulating swimming and swarming in a bis-(3'-5') cyclic diguanylic acid (c-di-GMP)-dependent manner. Binds 1 c-di-GMP dimer per subunit. Increasing levels of c-di-GMP lead to decreased motility. This is Flagellar brake protein YcgR from Yersinia pseudotuberculosis serotype I (strain IP32953).